The primary structure comprises 355 residues: Heat-inducible transcription repressor HrcA (355 aa).

This sequence belongs to the HrcA family.

In terms of biological role, negative regulator of class I heat shock genes (grpE-dnaK-dnaJ and groELS operons). Prevents heat-shock induction of these operons. In Nitratidesulfovibrio vulgaris (strain DSM 19637 / Miyazaki F) (Desulfovibrio vulgaris), this protein is Heat-inducible transcription repressor HrcA.